The primary structure comprises 360 residues: Chorismate synthase (360 aa).

Arginine 46 contributes to the NADP(+) binding site. FMN-binding positions include 123-125 (RSS), 235-236 (NA), glycine 275, 290-294 (KPTPS), and arginine 316.

The protein belongs to the chorismate synthase family. Homotetramer. It depends on FMNH2 as a cofactor.

It catalyses the reaction 5-O-(1-carboxyvinyl)-3-phosphoshikimate = chorismate + phosphate. It participates in metabolic intermediate biosynthesis; chorismate biosynthesis; chorismate from D-erythrose 4-phosphate and phosphoenolpyruvate: step 7/7. Catalyzes the anti-1,4-elimination of the C-3 phosphate and the C-6 proR hydrogen from 5-enolpyruvylshikimate-3-phosphate (EPSP) to yield chorismate, which is the branch point compound that serves as the starting substrate for the three terminal pathways of aromatic amino acid biosynthesis. This reaction introduces a second double bond into the aromatic ring system. This is Chorismate synthase from Wolinella succinogenes (strain ATCC 29543 / DSM 1740 / CCUG 13145 / JCM 31913 / LMG 7466 / NCTC 11488 / FDC 602W) (Vibrio succinogenes).